A 250-amino-acid polypeptide reads, in one-letter code: uncharacterized protein (250 aa).

Residue Lys17 forms a Glycyl lysine isopeptide (Lys-Gly) (interchain with G-Cter in ubiquitin) linkage. The segment at 30 to 67 is disordered; it reads REEDYVATSKDNIHHHPCDWSAKPSQRQNENEQKSTIR.

This is an uncharacterized protein from Saccharomyces cerevisiae (strain ATCC 204508 / S288c) (Baker's yeast).